We begin with the raw amino-acid sequence, 224 residues long: 7-cyano-7-deazaguanine synthase (224 aa).

ATP is bound at residue 12 to 22 (LSGGLDSSTVT). Zn(2+) is bound by residues C193, C201, C204, and C207.

The protein belongs to the QueC family. Zn(2+) is required as a cofactor.

The enzyme catalyses 7-carboxy-7-deazaguanine + NH4(+) + ATP = 7-cyano-7-deazaguanine + ADP + phosphate + H2O + H(+). It functions in the pathway purine metabolism; 7-cyano-7-deazaguanine biosynthesis. Its function is as follows. Catalyzes the ATP-dependent conversion of 7-carboxy-7-deazaguanine (CDG) to 7-cyano-7-deazaguanine (preQ(0)). The chain is 7-cyano-7-deazaguanine synthase from Prochlorococcus marinus subsp. pastoris (strain CCMP1986 / NIES-2087 / MED4).